Reading from the N-terminus, the 1541-residue chain is ATP-binding cassette sub-family C member 2 (1541 aa).

Residues 1–26 lie on the Extracellular side of the membrane; sequence MDKFCNSTFWDLSLLESPEADLPLCF. N-linked (GlcNAc...) asparagine glycosylation is present at N6. The helical transmembrane segment at 27 to 47 threads the bilayer; it reads EQTVLVWIPLGFLWLLAPWQL. The Cytoplasmic segment spans residues 48–67; it reads YSVYRSRTKRSSITKFYLAK. Residues 68-88 form a helical membrane-spanning segment; that stretch reads QVFVVFLLILAAIDLSLALTE. Residues 89 to 92 are Extracellular-facing; the sequence is DTGQ. The helical transmembrane segment at 93–113 threads the bilayer; the sequence is ATVPPVRYTNPILYLCTWLLV. Residues 114 to 125 lie on the Cytoplasmic side of the membrane; sequence LAVQHSRQWCVR. The helical transmembrane segment at 126–146 threads the bilayer; sequence KNSWFLSLFWILSVLCGVFQF. Residues 147 to 164 are Extracellular-facing; that stretch reads QTLIRALLKDSKSNMAYS. A helical membrane pass occupies residues 165–185; the sequence is YLFFVSYGFQIVLLILTAFSG. Topologically, residues 186 to 309 are cytoplasmic; it reads PSDSTQTPSV…DYPKSWLIKS (124 aa). 2 positions are modified to phosphoserine: S279 and S281. The helical transmembrane segment at 310–330 threads the bilayer; that stretch reads LFKTFHVVILKSFILKLIHDL. The ABC transmembrane type-1 1 domain maps to 318–601; that stretch reads ILKSFILKLI…LPMVTSSILQ (284 aa). Topologically, residues 331 to 356 are extracellular; sequence LVFLNPQLLKLLIGFVKSSNSYVWFG. A helical membrane pass occupies residues 357 to 377; it reads YICAILMFAVTLIQSFCLQSY. At 378–433 the chain is on the cytoplasmic side; it reads FQHCFVLGMCVRTTVMSSIYKKALTLSNLARKQYTIGETVNLMSVDSQKLMDATNY. A helical transmembrane segment spans residues 434 to 454; sequence MQLVWSSVIQITLSIFFLWRE. At 455–457 the chain is on the extracellular side; that stretch reads LGP. The helical transmembrane segment at 458–478 threads the bilayer; it reads SILAGVGVMVLLIPVNGVLAT. The Cytoplasmic segment spans residues 479 to 540; sequence KIRNIQVQNM…NLLRFGQLQS (62 aa). A helical transmembrane segment spans residues 541–561; sequence LLIFILQITPILVSVVTFSVY. Residues 562-583 are Extracellular-facing; sequence VLVDSANVLNAEKAFTSITLFN. The helical transmembrane segment at 584–604 threads the bilayer; the sequence is ILRFPLSMLPMVTSSILQASV. At 605-967 the chain is on the cytoplasmic side; that stretch reads SVDRLERYLG…VKFSIYLKYL (363 aa). The ABC transporter 1 domain maps to 633-857; the sequence is VKFSEASFTW…KGVFARNWKT (225 aa). Residue 667–674 coordinates ATP; the sequence is GTVGSGKS. Disordered stretches follow at residues 862 to 881 and 901 to 923; these read SGPE…DDDD and RENS…GKSL. S874 carries the phosphoserine modification. Over residues 906-915 the composition is skewed to low complexity; that stretch reads RRTLSRSSRS. Phosphoserine is present on residues S922 and S926. Residues 968–988 form a helical membrane-spanning segment; that stretch reads QAVGWWSILFIILFYGLNNVA. The ABC transmembrane type-1 2 domain maps to 975–1260; the sequence is ILFIILFYGL…LVRMTSEAET (286 aa). Residues 989–1029 lie on the Extracellular side of the membrane; the sequence is FIGSNLWLSAWTSDSDNLNGTNNSSSHRDMRIGVFGALGLA. Residues N1007, N1010, and N1011 are each glycosylated (N-linked (GlcNAc...) asparagine). Residues 1030–1050 traverse the membrane as a helical segment; that stretch reads QGICLLISTLWSIYACRNASK. Residues 1051 to 1093 are Cytoplasmic-facing; the sequence is ALHGQLLTNILRAPMRFFDTTPTGRIVNRFSGDISTVDDLLPQ. Residues 1094 to 1114 form a helical membrane-spanning segment; the sequence is TLRSWMMCFFGIAGTLVMICM. A1115 is a topological domain (extracellular). Residues 1116 to 1136 traverse the membrane as a helical segment; that stretch reads TPVFAIIIIPLSILYISVQVF. The Cytoplasmic portion of the chain corresponds to 1137–1207; sequence YVATSRQLRR…TSNRWLAIRL (71 aa). A helical membrane pass occupies residues 1208–1228; sequence ELVGNLVVFCSALLLVIYRKT. Over 1229–1230 the chain is Extracellular; it reads LT. The helical transmembrane segment at 1231-1251 threads the bilayer; sequence GDVVGFVLSNALNITQTLNWL. Over 1252 to 1541 the chain is Cytoplasmic; that stretch reads VRMTSEAETN…GIENVNHTEL (290 aa). One can recognise an ABC transporter 2 domain in the interval 1296-1530; the sequence is IQFNNYQVRY…RGSFYLMAKE (235 aa). Residue 1330–1337 participates in ATP binding; the sequence is GRTGAGKS. S1434 is subject to Phosphoserine.

Belongs to the ABC transporter superfamily. ABCC family. Conjugate transporter (TC 3.A.1.208) subfamily. Mainly expressed in the liver.

It is found in the apical cell membrane. It catalyses the reaction an S-substituted glutathione(in) + ATP + H2O = an S-substituted glutathione(out) + ADP + phosphate + H(+). The catalysed reaction is taurolithocholate 3-sulfate(in) + ATP + H2O = taurolithocholate 3-sulfate(out) + ADP + phosphate + H(+). The enzyme catalyses ATP + H2O + xenobioticSide 1 = ADP + phosphate + xenobioticSide 2.. It carries out the reaction 17beta-estradiol 17-O-(beta-D-glucuronate)(in) + ATP + H2O = 17beta-estradiol 17-O-(beta-D-glucuronate)(out) + ADP + phosphate + H(+). It catalyses the reaction leukotriene C4(in) + ATP + H2O = leukotriene C4(out) + ADP + phosphate + H(+). The catalysed reaction is (4Z,15Z)-bilirubin IXalpha C8-beta-D-glucuronoside(in) + ATP + H2O = (4Z,15Z)-bilirubin IXalpha C8-beta-D-glucuronoside(out) + ADP + phosphate + H(+). The enzyme catalyses (4Z,15Z)-bilirubin IXalpha C8,C12-beta-D-bisglucuronoside(in) + ATP + H2O = (4Z,15Z)-bilirubin IXalpha C8,C12-beta-D-bisglucuronoside(out) + ADP + phosphate + H(+). Its function is as follows. ATP-dependent transporter of the ATP-binding cassette (ABC) family that binds and hydrolyzes ATP to enable active transport of various substrates including many drugs, toxicants and endogenous compound across cell membranes. Transports a wide variety of conjugated organic anions such as sulfate-, glucuronide- and glutathione (GSH)-conjugates of endo- and xenobiotics substrates. Mediates hepatobiliary excretion of mono- and bis-glucuronidated bilirubin molecules and therefore play an important role in bilirubin detoxification. Also mediates hepatobiliary excretion of others glucuronide conjugates such as 17beta-estradiol 17-glucosiduronic acid and leukotriene C4. Transports sulfated bile salt such as taurolithocholate sulfate. Transports various anticancer drugs, such as anthracycline, vinca alkaloid and methotrexate and HIV-drugs such as protease inhibitors. The protein is ATP-binding cassette sub-family C member 2 of Rattus norvegicus (Rat).